The following is a 331-amino-acid chain: Probable transaldolase (331 aa).

The active-site Schiff-base intermediate with substrate is the K142.

It belongs to the transaldolase family. Type 1 subfamily. As to quaternary structure, homodimer.

The protein localises to the cytoplasm. The enzyme catalyses D-sedoheptulose 7-phosphate + D-glyceraldehyde 3-phosphate = D-erythrose 4-phosphate + beta-D-fructose 6-phosphate. It participates in carbohydrate degradation; pentose phosphate pathway; D-glyceraldehyde 3-phosphate and beta-D-fructose 6-phosphate from D-ribose 5-phosphate and D-xylulose 5-phosphate (non-oxidative stage): step 2/3. Functionally, transaldolase is important for the balance of metabolites in the pentose-phosphate pathway. The polypeptide is Probable transaldolase (Drosophila melanogaster (Fruit fly)).